The sequence spans 293 residues: Methylsterol monooxygenase 1 (293 aa).

Transmembrane regions (helical) follow at residues 55–75 and 100–120; these read LIVHEALYFLFCLPGFLFQFI and VLLFNHFCIQLPLICGTYYFT. Positions 145-274 constitute a Fatty acid hydroxylase domain; it reads CAVIEDTWHY…FTWWDRIFGT (130 aa). The Histidine box-1 signature appears at 157–161; that stretch reads HRLLH. Positions 170–174 match the Histidine box-2 motif; it reads HKVHH. Residues 199 to 219 traverse the membrane as a helical segment; it reads FFIGIVLLCDHVILLWAWVTI. The short motif at 249 to 255 is the Histidine box-3 element; sequence HHDFHHM.

The protein belongs to the sterol desaturase family. It depends on Fe cation as a cofactor. In terms of processing, ubiquitinated by MARCHF6, leading to proteasomal degradation.

The protein resides in the endoplasmic reticulum membrane. It catalyses the reaction 4,4-dimethyl-5alpha-cholest-7-en-3beta-ol + 6 Fe(II)-[cytochrome b5] + 3 O2 + 5 H(+) = 4alpha-carboxy-4beta-methyl-5alpha-cholest-7-ene-3beta-ol + 6 Fe(III)-[cytochrome b5] + 4 H2O. It carries out the reaction 4,4-dimethyl-5alpha-cholesta-8,24-dien-3beta-ol + 6 Fe(II)-[cytochrome b5] + 3 O2 + 5 H(+) = 4beta-methylzymosterol-4alpha-carboxylate + 6 Fe(III)-[cytochrome b5] + 4 H2O. The enzyme catalyses 4alpha-methylzymosterol + 6 Fe(II)-[cytochrome b5] + 3 O2 + 5 H(+) = 4alpha-carboxyzymosterol + 6 Fe(III)-[cytochrome b5] + 4 H2O. The catalysed reaction is 4alpha-methyl-5alpha-cholest-7-en-3beta-ol + 6 Fe(II)-[cytochrome b5] + 3 O2 + 5 H(+) = 4alpha-carboxy-5alpha-cholest-7-en-3beta-ol + 6 Fe(III)-[cytochrome b5] + 4 H2O. It catalyses the reaction 4,4-dimethyl-5alpha-cholest-8-en-3beta-ol + 6 Fe(II)-[cytochrome b5] + 3 O2 + 5 H(+) = 4alpha-carboxy-4beta-methyl-5alpha-cholest-8-en-3beta-ol + 6 Fe(III)-[cytochrome b5] + 4 H2O. It carries out the reaction 4alpha-methyl-5alpha-cholest-8-en-3beta-ol + 6 Fe(II)-[cytochrome b5] + 3 O2 + 5 H(+) = 4alpha-carboxy-5alpha-cholest-8-ene-3beta-ol + 6 Fe(III)-[cytochrome b5] + 4 H2O. The protein operates within steroid biosynthesis; zymosterol biosynthesis; zymosterol from lanosterol: step 3/6. It participates in steroid biosynthesis; cholesterol biosynthesis. Catalyzes the three-step monooxygenation required for the demethylation of 4,4-dimethyl and 4alpha-methylsterols, which can be subsequently metabolized to cholesterol. This chain is Methylsterol monooxygenase 1 (MSMO1), found in Pongo abelii (Sumatran orangutan).